A 256-amino-acid chain; its full sequence is Alcohol dehydrogenase (256 aa).

12-35 (FVAGLGGIGLDTSKELVKRDLKNL) lines the NAD(+) pocket. Position 140 (S140) interacts with substrate. Y153 functions as the Proton acceptor in the catalytic mechanism.

This sequence belongs to the short-chain dehydrogenases/reductases (SDR) family. In terms of assembly, homodimer.

The enzyme catalyses a primary alcohol + NAD(+) = an aldehyde + NADH + H(+). It carries out the reaction a secondary alcohol + NAD(+) = a ketone + NADH + H(+). This is Alcohol dehydrogenase (Adh) from Drosophila erecta (Fruit fly).